A 378-amino-acid chain; its full sequence is MSHVDNGFRSLTLKRFPETDDVNPLQAWEAADEYLLQQLDDTEISGPLLILNDAFGALSCALAEHTPYSIGDSYLSELATRENLRHNDIAESSVKFLDSTAAYPPAPGVVLIKVPKTLALLEQQLRALRQVVTPQTRIIAGAKARDIHTSTLELFEKVLGPTTTTLAWKKARLINCTFSKPELADAPQTLSWKLDGTDWTIHNHANVFSRTGLDIGARFFMQHLPENLEGEIVDLGCGNGVIGLTLLAKNPQASVVFVDESPMAVASSRLNVETNMPEALDRCEFMINNALSGVEPFRFNAVLCNPPFHQKHALTDNVAWEMFHHARRCLKINGELYIVANRHLDYFHKLKKIFGNCTTIATNNKFVVLKAVKTGRRR.

It belongs to the methyltransferase superfamily. RlmG family.

The protein localises to the cytoplasm. The enzyme catalyses guanosine(1835) in 23S rRNA + S-adenosyl-L-methionine = N(2)-methylguanosine(1835) in 23S rRNA + S-adenosyl-L-homocysteine + H(+). In terms of biological role, specifically methylates the guanine in position 1835 (m2G1835) of 23S rRNA. In Citrobacter koseri (strain ATCC BAA-895 / CDC 4225-83 / SGSC4696), this protein is Ribosomal RNA large subunit methyltransferase G.